The chain runs to 242 residues: Protein GrpE (242 aa).

Residues 1–10 (MAGENSSTET) are compositionally biased toward polar residues. The disordered stretch occupies residues 1 to 64 (MAGENSSTET…QSTESTSKEK (64 aa)). The segment covering 11-20 (KNQEINEKTP) has biased composition (basic and acidic residues). Polar residues-rich tracts occupy residues 21-32 (EVQTFETNVEFE) and 40-59 (DTELSADNASIDTDIQSTES).

The protein belongs to the GrpE family. In terms of assembly, homodimer.

It localises to the cytoplasm. In terms of biological role, participates actively in the response to hyperosmotic and heat shock by preventing the aggregation of stress-denatured proteins, in association with DnaK and GrpE. It is the nucleotide exchange factor for DnaK and may function as a thermosensor. Unfolded proteins bind initially to DnaJ; upon interaction with the DnaJ-bound protein, DnaK hydrolyzes its bound ATP, resulting in the formation of a stable complex. GrpE releases ADP from DnaK; ATP binding to DnaK triggers the release of the substrate protein, thus completing the reaction cycle. Several rounds of ATP-dependent interactions between DnaJ, DnaK and GrpE are required for fully efficient folding. This is Protein GrpE from Trichodesmium erythraeum (strain IMS101).